Reading from the N-terminus, the 298-residue chain is ATP phosphoribosyltransferase (298 aa).

Belongs to the ATP phosphoribosyltransferase family.

It localises to the cytoplasm. It catalyses the reaction 1-(5-phospho-beta-D-ribosyl)-ATP + diphosphate = 5-phospho-alpha-D-ribose 1-diphosphate + ATP. It participates in amino-acid biosynthesis; L-histidine biosynthesis; L-histidine from 5-phospho-alpha-D-ribose 1-diphosphate: step 1/9. Functionally, catalyzes the condensation of ATP and 5-phosphoribose 1-diphosphate to form N'-(5'-phosphoribosyl)-ATP (PR-ATP). Has a crucial role in the pathway because the rate of histidine biosynthesis seems to be controlled primarily by regulation of the enzymatic activity. The protein is ATP phosphoribosyltransferase (HIS1) of Candida albicans (strain SC5314 / ATCC MYA-2876) (Yeast).